We begin with the raw amino-acid sequence, 469 residues long: 3-isopropylmalate dehydratase large subunit (469 aa).

Residues cysteine 350, cysteine 410, and cysteine 413 each contribute to the [4Fe-4S] cluster site.

Belongs to the aconitase/IPM isomerase family. LeuC type 1 subfamily. As to quaternary structure, heterodimer of LeuC and LeuD. [4Fe-4S] cluster is required as a cofactor.

It catalyses the reaction (2R,3S)-3-isopropylmalate = (2S)-2-isopropylmalate. It functions in the pathway amino-acid biosynthesis; L-leucine biosynthesis; L-leucine from 3-methyl-2-oxobutanoate: step 2/4. In terms of biological role, catalyzes the isomerization between 2-isopropylmalate and 3-isopropylmalate, via the formation of 2-isopropylmaleate. In Rhodopseudomonas palustris (strain TIE-1), this protein is 3-isopropylmalate dehydratase large subunit.